Reading from the N-terminus, the 1159-residue chain is DNA-directed RNA polymerase subunit beta' (1159 aa).

3 residues coordinate Mg(2+): Asp-398, Asp-400, and Asp-402. Cys-741, Cys-815, Cys-822, and Cys-825 together coordinate Zn(2+).

It belongs to the RNA polymerase beta' chain family. As to quaternary structure, the RNAP catalytic core consists of 2 alpha, 1 beta, 1 beta' and 1 omega subunit. When a sigma factor is associated with the core the holoenzyme is formed, which can initiate transcription. The cofactor is Mg(2+). Zn(2+) serves as cofactor.

The enzyme catalyses RNA(n) + a ribonucleoside 5'-triphosphate = RNA(n+1) + diphosphate. DNA-dependent RNA polymerase catalyzes the transcription of DNA into RNA using the four ribonucleoside triphosphates as substrates. This chain is DNA-directed RNA polymerase subunit beta', found in Porphyromonas cangingivalis.